Reading from the N-terminus, the 198-residue chain is Shikimate kinase (198 aa).

26 to 31 (GSGKSQ) is an ATP binding site. Ser-30 provides a ligand contact to Mg(2+). Substrate is bound by residues Asp-48, Arg-72, and Gly-94. Position 132 (Arg-132) interacts with ATP. A substrate-binding site is contributed by Arg-151. Position 167 (Gln-167) interacts with ATP.

The protein belongs to the shikimate kinase family. Monomer. Mg(2+) serves as cofactor.

Its subcellular location is the cytoplasm. It catalyses the reaction shikimate + ATP = 3-phosphoshikimate + ADP + H(+). It functions in the pathway metabolic intermediate biosynthesis; chorismate biosynthesis; chorismate from D-erythrose 4-phosphate and phosphoenolpyruvate: step 5/7. In terms of biological role, catalyzes the specific phosphorylation of the 3-hydroxyl group of shikimic acid using ATP as a cosubstrate. The chain is Shikimate kinase from Prochlorococcus marinus (strain NATL2A).